The chain runs to 484 residues: Hexokinase-2 (484 aa).

Positions 21-467 constitute a Hexokinase domain; that stretch reads PQLLEALKPI…SGVGAAVIAA (447 aa). Positions 75-208 are hexokinase small subdomain; the sequence is TGKETGSYLA…GVPIDVVALI (134 aa). The tract at residues 209-456 is hexokinase large subdomain; sequence NDTTGTLVAS…DPIIIVPAED (248 aa).

This sequence belongs to the hexokinase family. As to quaternary structure, monomer.

The protein localises to the cytoplasm. It catalyses the reaction a D-hexose + ATP = a D-hexose 6-phosphate + ADP + H(+). The catalysed reaction is D-fructose + ATP = D-fructose 6-phosphate + ADP + H(+). The enzyme catalyses D-glucose + ATP = D-glucose 6-phosphate + ADP + H(+). It participates in carbohydrate metabolism; hexose metabolism. Its pathway is carbohydrate degradation; glycolysis; D-glyceraldehyde 3-phosphate and glycerone phosphate from D-glucose: step 1/4. Functionally, catalyzes the phosphorylation of hexose, such as D-glucose and D-fructose, to hexose 6-phosphate (D-glucose 6-phosphate and D-fructose 6-phosphate, respectively). Mediates the initial step of glycolysis by catalyzing phosphorylation of D-glucose to D-glucose 6-phosphate. The protein is Hexokinase-2 (HXK2) of Candida albicans (strain SC5314 / ATCC MYA-2876) (Yeast).